The chain runs to 181 residues: Der GTPase-activating protein YihI (181 aa).

The interval 1–73 (MSRIKKARKP…DPRIGSKKPI (73 aa)) is disordered. Positions 22-32 (NRTDRDVESRE) are enriched in basic and acidic residues. Residues 33–42 (IKRKRKRKGL) are compositionally biased toward basic residues. Residues 55–67 (QARRNAQKKDPRI) are compositionally biased toward basic and acidic residues.

Belongs to the YihI family. In terms of assembly, interacts with Der.

A GTPase-activating protein (GAP) that modifies Der/EngA GTPase function. May play a role in ribosome biogenesis. This Aliivibrio fischeri (strain ATCC 700601 / ES114) (Vibrio fischeri) protein is Der GTPase-activating protein YihI.